The chain runs to 118 residues: M-zodatoxin-Lt8p (118 aa).

An N-terminal signal peptide occupies residues 1 to 3; the sequence is AES. A propeptide spanning residues 4–43 is cleaved from the precursor; that stretch reads KPAESEHELAEVEEENELADLEDAVWLEHLADLSDLEEAR.

It belongs to the cationic peptide 06 (cytoinsectotoxin) family. Expressed by the venom gland.

It localises to the secreted. Functionally, insecticidal, cytolytic and antimicrobial peptide. Forms voltage-dependent, ion-permeable channels in membranes. At high concentration causes cell membrane lysis. The polypeptide is M-zodatoxin-Lt8p (cit 1-15) (Lachesana tarabaevi (Spider)).